Here is a 428-residue protein sequence, read N- to C-terminus: Citrate synthase (428 aa).

Catalysis depends on residues His265, His306, and Asp363.

This sequence belongs to the citrate synthase family. In terms of assembly, homohexamer.

The enzyme catalyses oxaloacetate + acetyl-CoA + H2O = citrate + CoA + H(+). The protein operates within carbohydrate metabolism; tricarboxylic acid cycle; isocitrate from oxaloacetate: step 1/2. With respect to regulation, allosterically inhibited by NADH. The sequence is that of Citrate synthase (gltA) from Pseudomonas aeruginosa (strain ATCC 15692 / DSM 22644 / CIP 104116 / JCM 14847 / LMG 12228 / 1C / PRS 101 / PAO1).